The chain runs to 98 residues: NADH-ubiquinone oxidoreductase chain 4L (98 aa).

Helical transmembrane passes span 1 to 21 (MSMVYINIFLAFTMSLMGLLM), 29 to 49 (SLLCLEGMMLSLFIMMAVAIL), and 61 to 81 (IILLVFAACEAALGLSLLVMV).

Belongs to the complex I subunit 4L family. Core subunit of respiratory chain NADH dehydrogenase (Complex I) which is composed of 45 different subunits.

The protein localises to the mitochondrion inner membrane. The enzyme catalyses a ubiquinone + NADH + 5 H(+)(in) = a ubiquinol + NAD(+) + 4 H(+)(out). Core subunit of the mitochondrial membrane respiratory chain NADH dehydrogenase (Complex I) which catalyzes electron transfer from NADH through the respiratory chain, using ubiquinone as an electron acceptor. Part of the enzyme membrane arm which is embedded in the lipid bilayer and involved in proton translocation. The sequence is that of NADH-ubiquinone oxidoreductase chain 4L (MT-ND4L) from Puma concolor (Mountain lion).